We begin with the raw amino-acid sequence, 242 residues long: Large ribosomal subunit protein uL1 (242 aa).

It belongs to the universal ribosomal protein uL1 family. In terms of assembly, part of the 50S ribosomal subunit.

In terms of biological role, binds directly to 23S rRNA. The L1 stalk is quite mobile in the ribosome, and is involved in E site tRNA release. Protein L1 is also a translational repressor protein, it controls the translation of the L11 operon by binding to its mRNA. The polypeptide is Large ribosomal subunit protein uL1 (Streptomyces sp. (strain FRI-5)).